The chain runs to 265 residues: Mlc titration factor A (265 aa).

Residues His-111, His-148, His-152, and Glu-211 each contribute to the Zn(2+) site.

The protein belongs to the MtfA family. As to quaternary structure, interacts with Mlc. The cofactor is Zn(2+).

It is found in the cytoplasm. Its function is as follows. Involved in the modulation of the activity of the glucose-phosphotransferase system (glucose-PTS). Interacts with the transcriptional repressor Mlc, preventing its interaction with DNA and leading to the modulation of expression of genes regulated by Mlc, including ptsG, which encodes the PTS system glucose-specific EIICB component. Shows zinc-dependent metallopeptidase activity. This Escherichia fergusonii (strain ATCC 35469 / DSM 13698 / CCUG 18766 / IAM 14443 / JCM 21226 / LMG 7866 / NBRC 102419 / NCTC 12128 / CDC 0568-73) protein is Mlc titration factor A.